We begin with the raw amino-acid sequence, 465 residues long: Antithrombin-III (465 aa).

An N-terminal signal peptide occupies residues 1 to 32; that stretch reads MISNGIGTVTTGKRSMCLFPLLLIGLWGCVTC. 2 disulfides stabilise this stretch: Cys-41–Cys-161 and Cys-54–Cys-128. Thr-64 carries the post-translational modification Phosphothreonine. A Phosphoserine modification is found at Ser-69. Trp-82 contacts heparin. An N-linked (GlcNAc...) asparagine glycan is attached at Asn-129. Arg-162 is a binding site for heparin. Asn-168 is a glycosylation site (N-linked (GlcNAc...) asparagine). Arg-178 is a heparin binding site. Asn-188 and Asn-225 each carry an N-linked (GlcNAc...) asparagine glycan. Cys-280 and Cys-463 form a disulfide bridge.

The protein belongs to the serpin family. As to quaternary structure, forms protease inhibiting heterodimer with TMPRSS7. Post-translationally, phosphorylated by FAM20C in the extracellular medium. In terms of tissue distribution, plasma.

It localises to the secreted. The protein resides in the extracellular space. Most important serine protease inhibitor in plasma that regulates the blood coagulation cascade. AT-III inhibits thrombin, matriptase-3/TMPRSS7, as well as factors IXa, Xa and XIa. Its inhibitory activity is greatly enhanced in the presence of heparin. The chain is Antithrombin-III (SERPINC1) from Ovis aries (Sheep).